The chain runs to 106 residues: Replication protein A 14 kDa subunit B (106 aa).

Position 1 is an N-acetylmethionine (M1).

This sequence belongs to the replication factor A protein 3 family. As to quaternary structure, component of the heterotrimeric canonical replication protein A complex (RPA).

It is found in the nucleus. Functionally, as part of the replication protein A (RPA/RP-A), a single-stranded DNA-binding heterotrimeric complex, may play an essential role in DNA replication, recombination and repair. Binds and stabilizes single-stranded DNA intermediates, preventing complementary DNA reannealing and recruiting different proteins involved in DNA metabolism. The polypeptide is Replication protein A 14 kDa subunit B (RPA3B) (Arabidopsis thaliana (Mouse-ear cress)).